Consider the following 704-residue polypeptide: Elongation factor G (704 aa).

Residues 8 to 290 (EKYRNIGICA…GVVRYLPAPN (283 aa)) enclose the tr-type G domain. GTP-binding positions include 17-24 (AHVDAGKT), 88-92 (DTPGH), and 142-145 (NKMD).

Belongs to the TRAFAC class translation factor GTPase superfamily. Classic translation factor GTPase family. EF-G/EF-2 subfamily.

It is found in the cytoplasm. Catalyzes the GTP-dependent ribosomal translocation step during translation elongation. During this step, the ribosome changes from the pre-translocational (PRE) to the post-translocational (POST) state as the newly formed A-site-bound peptidyl-tRNA and P-site-bound deacylated tRNA move to the P and E sites, respectively. Catalyzes the coordinated movement of the two tRNA molecules, the mRNA and conformational changes in the ribosome. This Francisella tularensis subsp. mediasiatica (strain FSC147) protein is Elongation factor G.